The chain runs to 59 residues: Large ribosomal subunit protein uL30 (59 aa).

Belongs to the universal ribosomal protein uL30 family. In terms of assembly, part of the 50S ribosomal subunit.

The chain is Large ribosomal subunit protein uL30 from Staphylococcus epidermidis (strain ATCC 12228 / FDA PCI 1200).